The primary structure comprises 734 residues: Photosystem I P700 chlorophyll a apoprotein A2 (734 aa).

8 helical membrane-spanning segments follow: residues 46–69 (IFASHFGQLAIIFLWTSGNLFHVA), 135–158 (LYTGALFLLFLSAISLIAGWLHLQ), 175–199 (LNHHLSGLFGVSSLAWTGHLVHVAI), 273–291 (IAHHHLAIAFVFLVAGHMY), 330–353 (IHFQLGLALASLGVITSLVAQHMY), 369–395 (AALYTHHQYIAGFIMTGAFAHGAIFFI), 417–439 (AIKSHLSWASLFLGFHTLGLYVH), and 517–535 (FLVHHAIALGLHTTTLILV). Positions 559 and 568 each coordinate [4Fe-4S] cluster. A run of 2 helical transmembrane segments spans residues 575 to 596 (AFYLAVFWMLNTIGWVTFYWHW) and 643 to 665 (LSVWAWMFLFGHLVWATGFMFLI). Positions 654, 662, and 670 each coordinate chlorophyll a. Trp-671 serves as a coordination point for phylloquinone. A helical membrane pass occupies residues 707-727 (LVGLAHFSVGYIFTYAAFLIA).

This sequence belongs to the PsaA/PsaB family. The PsaA/B heterodimer binds the P700 chlorophyll special pair and subsequent electron acceptors. PSI consists of a core antenna complex that captures photons, and an electron transfer chain that converts photonic excitation into a charge separation. The eukaryotic PSI reaction center is composed of at least 11 subunits. The cofactor is P700 is a chlorophyll a/chlorophyll a' dimer, A0 is one or more chlorophyll a, A1 is one or both phylloquinones and FX is a shared 4Fe-4S iron-sulfur center..

The protein resides in the plastid. The protein localises to the chloroplast thylakoid membrane. It catalyses the reaction reduced [plastocyanin] + hnu + oxidized [2Fe-2S]-[ferredoxin] = oxidized [plastocyanin] + reduced [2Fe-2S]-[ferredoxin]. PsaA and PsaB bind P700, the primary electron donor of photosystem I (PSI), as well as the electron acceptors A0, A1 and FX. PSI is a plastocyanin-ferredoxin oxidoreductase, converting photonic excitation into a charge separation, which transfers an electron from the donor P700 chlorophyll pair to the spectroscopically characterized acceptors A0, A1, FX, FA and FB in turn. Oxidized P700 is reduced on the lumenal side of the thylakoid membrane by plastocyanin. The sequence is that of Photosystem I P700 chlorophyll a apoprotein A2 from Illicium oligandrum (Star anise).